Reading from the N-terminus, the 101-residue chain is MPMERDSHEEILNKLNDPELEHSERTELLQQLRADYGSVLSEFSELTSATEKLRAENSDLIVSNSKLFRQVGITKEKEEEIKQEELSETITIEDLEKQAQL.

The interval 1 to 24 is disordered; that stretch reads MPMERDSHEEILNKLNDPELEHSE. The stretch at 79-99 forms a coiled coil; sequence EEIKQEELSETITIEDLEKQA.

It belongs to the phi29likevirus scaffolding protein family. In terms of assembly, homodimer. Interacts non-specifically with DNA; probably binds DNA in the early stages of DNA packaging.

Functionally, scaffolding protein involved in the icosahedric procapsid assembly. Coassembles with the capsid proteins to form the procapsid. The scaffolding protein is found within the capsid as a serie of concentric shells. During DNA packaging, the scaffolding protein molecules are released from the procapsid. The sequence is that of Capsid assembly scaffolding protein (7) from Bacillus subtilis (Bacteriophage B103).